The following is a 448-amino-acid chain: Probable glycine dehydrogenase (decarboxylating) subunit 1 (448 aa).

This sequence belongs to the GcvP family. N-terminal subunit subfamily. The glycine cleavage system is composed of four proteins: P, T, L and H. In this organism, the P 'protein' is a heterodimer of two subunits.

The enzyme catalyses N(6)-[(R)-lipoyl]-L-lysyl-[glycine-cleavage complex H protein] + glycine + H(+) = N(6)-[(R)-S(8)-aminomethyldihydrolipoyl]-L-lysyl-[glycine-cleavage complex H protein] + CO2. In terms of biological role, the glycine cleavage system catalyzes the degradation of glycine. The P protein binds the alpha-amino group of glycine through its pyridoxal phosphate cofactor; CO(2) is released and the remaining methylamine moiety is then transferred to the lipoamide cofactor of the H protein. The sequence is that of Probable glycine dehydrogenase (decarboxylating) subunit 1 from Listeria monocytogenes serotype 4a (strain HCC23).